Reading from the N-terminus, the 364-residue chain is Ribosomal RNA large subunit methyltransferase M (364 aa).

S-adenosyl-L-methionine is bound by residues S198, 231 to 234 (APGG), D250, D270, and D286. Residue K315 is the Proton acceptor of the active site.

The protein belongs to the class I-like SAM-binding methyltransferase superfamily. RNA methyltransferase RlmE family. RlmM subfamily. In terms of assembly, monomer.

It is found in the cytoplasm. It carries out the reaction cytidine(2498) in 23S rRNA + S-adenosyl-L-methionine = 2'-O-methylcytidine(2498) in 23S rRNA + S-adenosyl-L-homocysteine + H(+). Its function is as follows. Catalyzes the 2'-O-methylation at nucleotide C2498 in 23S rRNA. The chain is Ribosomal RNA large subunit methyltransferase M from Azoarcus sp. (strain BH72).